The sequence spans 1126 residues: Ubiquitin carboxyl-terminal hydrolase 16/45 (1126 aa).

Basic and acidic residues predominate over residues 1-15 (MVKKRQADSRDHDCS). A disordered region spans residues 1–44 (MVKKRQADSRDHDCSTDSGNEDLHHRKGLGSPGQSDGATPTTAS). Over residues 32-44 (PGQSDGATPTTAS) the composition is skewed to polar residues. The segment at 43 to 181 (ASCQHIKKAV…ELVKKLAQKP (139 aa)) adopts a UBP-type zinc-finger fold. Residues cysteine 45, histidine 47, cysteine 70, cysteine 73, cysteine 111, cysteine 114, cysteine 119, histidine 126, histidine 130, histidine 139, cysteine 152, and cysteine 155 each coordinate Zn(2+). 2 stretches are compositionally biased toward low complexity: residues 215–229 (GGSFDDSSSRGSLAA) and 254–264 (SSGLSTSDSLT). Positions 215 to 264 (GGSFDDSSSRGSLAAAGGGGGVGSSRNRQVAIPMPPPEPSSGLSTSDSLT) are disordered. The active-site Nucleophile is cysteine 315. Disordered regions lie at residues 513-547 (KPQPPQRRKPSPELSLTSSSSSVTPSTGQPTINTK), 570-762 (ASLG…SGSS), and 795-833 (EQGASNGTEDADGEAKAIEQPEKTPSQAQAMAQAQARTK). Residues 524–539 (PELSLTSSSSSVTPST) are compositionally biased toward low complexity. Basic residues predominate over residues 586-598 (QRKAKRAAKKRQK). 2 stretches are compositionally biased toward low complexity: residues 599–614 (SSLNLNGNDSGNGNEL) and 646–657 (TEDSTTSSVTTS). Residues 674–701 (APSTNNVPSSTASLTAPSKTYMDSNGNA) are compositionally biased toward polar residues. The span at 705-718 (GEKRDDTPEHMDKD) shows a compositional bias: basic and acidic residues. Low complexity predominate over residues 730–762 (ATSPAPTATNSSTSTSATGNNNSVAGSGLSGSS). Residues 807 to 816 (GEAKAIEQPE) show a composition bias toward basic and acidic residues. Residues 821-830 (QAQAMAQAQA) show a composition bias toward low complexity. Residue histidine 984 is the Proton acceptor of the active site. Residues 1037-1089 (LKVLDDSDDFSNSSSNSSTSDESQTPATPLEEQQTQQAQQPQQPQQLEEAANV) form a disordered region. Positions 1046–1086 (FSNSSSNSSTSDESQTPATPLEEQQTQQAQQPQQPQQLEEA) are enriched in low complexity.

Belongs to the peptidase C19 family.

The catalysed reaction is Thiol-dependent hydrolysis of ester, thioester, amide, peptide and isopeptide bonds formed by the C-terminal Gly of ubiquitin (a 76-residue protein attached to proteins as an intracellular targeting signal).. In terms of biological role, involved in the regulation of DNA damage repair. This chain is Ubiquitin carboxyl-terminal hydrolase 16/45, found in Drosophila melanogaster (Fruit fly).